We begin with the raw amino-acid sequence, 197 residues long: MYTPPLARLIEQLQRLPGVGPKTAQRLALHILKRPENEIQALASALIEAKKKVGLCNVCFHFSADPICEICRNPNRDKQTICVVADSRDVIALEKTREYKGRYHVLGGVMSPMDGIGPEQLYIQPLVRRVTQDGVKEVILAISPTVEGETTTLYIGQLLKPFTKVTRIAFGLPMGGDLEYADEVTLARALEGRRELD.

A C4-type zinc finger spans residues 56–71 (CNVCFHFSADPICEIC). Positions 79–173 (QTICVVADSR…KVTRIAFGLP (95 aa)) constitute a Toprim domain.

It belongs to the RecR family.

In terms of biological role, may play a role in DNA repair. It seems to be involved in an RecBC-independent recombinational process of DNA repair. It may act with RecF and RecO. In Rippkaea orientalis (strain PCC 8801 / RF-1) (Cyanothece sp. (strain PCC 8801)), this protein is Recombination protein RecR.